A 200-amino-acid chain; its full sequence is ATP synthase subunit s, mitochondrial (200 aa).

The transit peptide at 1 to 25 directs the protein to the mitochondrion; the sequence is MMLFGKVSQQLCGIKKLPWSCDSRY. The interval 1-61 is N-terminal domain; the sequence is MMLFGKVSQQ…SEWLLRCGAM (61 aa). A Mg(2+)-binding site is contributed by Gly-59. LRR repeat units lie at residues 62–87, 88–116, 117–141, and 142–173; these read VRYH…KYKI, QAID…KIRL, CKCH…KSIL, and EMEI…LSDL. Thr-93 contributes to the Mg(2+) binding site.

The protein belongs to the ATP synthase subunit s family. As to quaternary structure, homotetramer. Associates with ATP synthase.

It is found in the mitochondrion. The protein localises to the mitochondrion inner membrane. Involved in regulation of mitochondrial membrane ATP synthase. Necessary for H(+) conduction of ATP synthase. Facilitates energy-driven catalysis of ATP synthesis by blocking a proton leak through an alternative proton exit pathway. This is ATP synthase subunit s, mitochondrial (DMAC2L) from Macaca fascicularis (Crab-eating macaque).